An 807-amino-acid polypeptide reads, in one-letter code: Glycerol-3-phosphate acyltransferase (807 aa).

An HXXXXD motif motif is present at residues 305–310; it reads CHRSHM.

The protein belongs to the GPAT/DAPAT family.

The protein resides in the cell inner membrane. It catalyses the reaction sn-glycerol 3-phosphate + an acyl-CoA = a 1-acyl-sn-glycero-3-phosphate + CoA. Its pathway is phospholipid metabolism; CDP-diacylglycerol biosynthesis; CDP-diacylglycerol from sn-glycerol 3-phosphate: step 1/3. The chain is Glycerol-3-phosphate acyltransferase from Aliivibrio fischeri (strain MJ11) (Vibrio fischeri).